A 362-amino-acid chain; its full sequence is MQSPTAQGTNDGVLPARTWPSVLGALTDGRDLAVDDAKWAMDEIMSDNATSAQIAAFGVALKMKGETPEELRGLADSMLGHARKVPVDDDVVDIVGTGGDRSNTVNISTMASLVVAASGIRVVKHGNRAASSKSGGADVLEALGVKINLGPDEVARCVREVGIGFCFAPVFHPALRFAGAPRKEIGIPTVFNVLGPLTNPARPRAGLIGCAFPGLISVVAGVLAQRGNSALVVRGDDGLDELTTSTTSTVHIVADGSVTTRGFDPRDIGIARVSLDELRGGNADVNAAVARRLLAGETGPVRDAVLLNAAAAIAAFRGLGGRTLEDGLSDGLATAAQSIDSGAAGALLGRWAELTSGLASSK.

5-phospho-alpha-D-ribose 1-diphosphate is bound by residues glycine 96, 99-100 (GD), threonine 104, 106-109 (NIST), 124-132 (KHGNRAASS), and glycine 136. Glycine 96 contacts anthranilate. Serine 108 is a Mg(2+) binding site. Residue asparagine 127 participates in anthranilate binding. Arginine 182 lines the anthranilate pocket. Mg(2+) is bound by residues aspartate 240 and glutamate 241.

It belongs to the anthranilate phosphoribosyltransferase family. Homodimer. Mg(2+) serves as cofactor.

It carries out the reaction N-(5-phospho-beta-D-ribosyl)anthranilate + diphosphate = 5-phospho-alpha-D-ribose 1-diphosphate + anthranilate. It functions in the pathway amino-acid biosynthesis; L-tryptophan biosynthesis; L-tryptophan from chorismate: step 2/5. Its function is as follows. Catalyzes the transfer of the phosphoribosyl group of 5-phosphorylribose-1-pyrophosphate (PRPP) to anthranilate to yield N-(5'-phosphoribosyl)-anthranilate (PRA). The protein is Anthranilate phosphoribosyltransferase of Rhodococcus opacus (strain B4).